The primary structure comprises 1024 residues: Non-canonical nonribosomal peptide synthetase FrzA (1024 aa).

The adenylation (A) domain stretch occupies residues Arg29 to Arg425. Residues Asn534–Leu611 enclose the Carrier domain. O-(pantetheine 4'-phosphoryl)serine is present on Ser571. The Thioester reductase (TE) domain occupies Leu655 to Ile898.

The protein belongs to the NRP synthetase family. Requires pantetheine 4'-phosphate as cofactor.

It carries out the reaction L-tyrosinal + AMP + diphosphate + NADP(+) = L-tyrosine + ATP + NADPH + H(+). The protein operates within secondary metabolite biosynthesis. In terms of biological role, non-canonical nonribosomal peptide synthetase; part of the gene cluster that mediates the biosynthesis of the alkaloid (-)-FR901483, a potent immunosuppressant that shows efficacy in animal models and a probable inhibitor of purine nucleotide biosynthesis by targeting phosphoribosylpyrophosphate amidotransferase (PPAT). Within the pathway, FrzA catalyzes the reduction of L-tyrosine via its C-terminal reductase domain to produce L-tyrosinal. The biosynthesis of (-)-FR901483 starts with the condensation of two L-tyrosines to yield (S,S)-dityrosyl-piperazine. This process occurs in 3 steps with the non-canonical nonribosomal peptide synthetase FrzA catalyzing the reduction of L-tyrosine into L-tyrosinal, the spontaneous condensation of 2 L-tyrosinal units, and the subsequent reduction by the NmrA-like family domain-containing oxidoreductase FrzB. The cytochrome P450 monooxygenase FrzC then performs coupling between N10 and C1' to morph the piperazine into a 1,4-diazabicyclo[3.2.1]octane spiro-fused to a 2,5-cyclohexadienone. The dienone portion is further reduced to cyclohexanone by the flavin-dependent reductase FrzD. The methyltranserases (MTs) FrzE and FrzF are then involved in the methylation at the C10' amine and the C4 phenolic oxygen, respectively. The order of the two MTs appear to be interchangeable. Cleavage of the C9-N10' bond by the dioxygenase FrzG then leads to formation of a conjugated iminium. In addition to the oxidation of C9, an additional dehydrogenation between C7 and C8 can occur to give a likely shunt product. The next biosynthetic step is the intramolecular aldol condensation catalyzed by the newly identified aldolase FrzH to yield an aza-tricyclic product with the formation of a C9-C3' bond. The short-chain dehydrogenase/reductase FrzI then produces dephospho-(-)-FR901483 that is phosphorylated at C4'-OH into (-)-FR901483 by the phosphotransferase FrzJ. This is Non-canonical nonribosomal peptide synthetase FrzA from Cladobotryum sp.